Reading from the N-terminus, the 328-residue chain is 5,10-methylenetetrahydromethanopterin reductase (328 aa).

This sequence belongs to the mer family.

Its subcellular location is the cytoplasm. The enzyme catalyses 5-methyl-5,6,7,8-tetrahydromethanopterin + oxidized coenzyme F420-(gamma-L-Glu)(n) + H(+) = 5,10-methylenetetrahydromethanopterin + reduced coenzyme F420-(gamma-L-Glu)(n). It participates in one-carbon metabolism; methanogenesis from CO(2); methyl-coenzyme M from 5,10-methylene-5,6,7,8-tetrahydromethanopterin: step 1/2. Its function is as follows. Catalyzes the reversible reduction of methylene-H(4)MPT to methyl-H(4)MPT. The sequence is that of 5,10-methylenetetrahydromethanopterin reductase from Methanosarcina barkeri (strain Fusaro / DSM 804).